The sequence spans 90 residues: Acylphosphatase (90 aa).

Residues 4–90 enclose the Acylphosphatase-like domain; the sequence is TVHLRITGHV…KGQYKDFRIY (87 aa). Active-site residues include Arg19 and Asn37.

This sequence belongs to the acylphosphatase family.

The enzyme catalyses an acyl phosphate + H2O = a carboxylate + phosphate + H(+). This chain is Acylphosphatase (acyP), found in Caldanaerobacter subterraneus subsp. tengcongensis (strain DSM 15242 / JCM 11007 / NBRC 100824 / MB4) (Thermoanaerobacter tengcongensis).